The chain runs to 415 residues: BTB/POZ and MATH domain-containing protein 6 (415 aa).

The disordered stretch occupies residues 1 to 33 (MSKLMTRTSGSSSPNTIPDQIESPTSSRSVTQT). One can recognise an MATH domain in the interval 35–169 (NGSHQFVIQG…DDCLKINCTV (135 aa)). The BTB domain occupies 205-271 (SDVTFDVAGE…MYKDSLPGDV (67 aa)). A disordered region spans residues 385–415 (SSSGGGKSQSVWAQLSNGGETSSRRVRQRTT). Polar residues predominate over residues 392 to 405 (SQSVWAQLSNGGET).

The protein belongs to the Tdpoz family. In terms of assembly, heterodimer with BPM1. Interacts with RAP2-4. Interacts with CUL3A. Binds to MYB56 at the promoter of FLOWERING LOCUS T (FT). As to expression, ubiquitous.

Its subcellular location is the nucleus. It localises to the cytoplasm. It participates in protein modification; protein ubiquitination. In terms of biological role, may act as a substrate-specific adapter of an E3 ubiquitin-protein ligase complex (CUL3-RBX1-BTB) which mediates the ubiquitination and subsequent proteasomal degradation of target proteins. The protein is BTB/POZ and MATH domain-containing protein 6 (BPM6) of Arabidopsis thaliana (Mouse-ear cress).